Consider the following 71-residue polypeptide: uncharacterized protein (71 aa).

This is an uncharacterized protein from Bacillus subtilis (strain 168).